The following is a 608-amino-acid chain: Probable cytosolic Fe-S cluster assembly factor SPAC806.02c (608 aa).

An ATP-binding site is contributed by 13 to 20 (GKGGVGKS). The [4Fe-4S] cluster site is built by Cys201 and Cys204. WD repeat units follow at residues 288–327 (GHTG…LVHV), 331–371 (FHTR…WECT), 376–415 (GHEN…EFDC), 421–460 (EHTQ…WALT), 465–504 (GHTN…EDVA), 529–567 (IHKG…EALW), and 576–608 (AHGV…WSFK).

It in the N-terminal section; belongs to the Mrp/NBP35 ATP-binding proteins family. NUBP2/CFD1 subfamily. The protein in the C-terminal section; belongs to the WD repeat CIA1 family. As to quaternary structure, heterotetramer of 2 nbp35 and 2 SPAC806.02c chains. The cofactor is [4Fe-4S] cluster.

It localises to the cytoplasm. It is found in the nucleus. Its function is as follows. Fusion protein of two essential components of the cytosolic iron-sulfur (Fe/S) protein assembly (CIA) machinery. Required for maturation of extramitochondrial Fe-S proteins. May form a heterotetramer with nubp35, functioning as a Fe-S scaffold complex, mediating the de novo assembly of an Fe-S cluster and its transfer to target apoproteins. This Schizosaccharomyces pombe (strain 972 / ATCC 24843) (Fission yeast) protein is Probable cytosolic Fe-S cluster assembly factor SPAC806.02c.